The sequence spans 258 residues: MARFHRPSEDEDDYEYSDLWVRENSLYDYESGSDDHVYEELRAATSGPEPSGRRASVRACASAAAVQPAARGRDRAAAAGTTVAAPAAAPARRSSSRASSRPPRAAADPPVLRPATRGSSGGAGAVAVGPPRPRAPPGANAVASGRPLAFSAAPKTPKAPWCGPTHAYNRTIFCEAVALVAAEYARQAAASVWDSDPPKSNERLDRMLKSAAIRILVCEGSGLLAAANDILAARAQRPAARGSTSGGESRLRGERARP.

The interval 66–143 (VQPAARGRDR…RAPPGANAVA (78 aa)) is disordered. The span at 77-118 (AAAGTTVAAPAAAPARRSSSRASSRPPRAAADPPVLRPATRG) shows a compositional bias: low complexity. A Nuclear localization signal motif is present at residues 131–134 (PRPR). The short motif at 204 to 216 (LDRMLKSAAIRIL) is the Nuclear export signal element. Positions 234–258 (RAQRPAARGSTSGGESRLRGERARP) are disordered. Residues 249–258 (SRLRGERARP) show a composition bias toward basic and acidic residues.

The protein belongs to the alphaherpesvirinae VP22 tegument protein family. Interacts with gE (via C-terminus); this interaction is necessary for the recruitment of VP22 to the Golgi and its packaging into virions. Interacts with gM (via C-terminus). Interacts with VP16; this interaction allows the formation of a tripartite complex composed of VP16, VP22 and UL41/VHS. Interacts with the capsid-binding protein UL16. Interacts with host CGAS. Post-translationally, highly phosphorylated in the host cell. Packaging is selective for underphosphorylated forms.

The protein localises to the virion tegument. It localises to the host cytoplasm. It is found in the host nucleus. Its subcellular location is the host Golgi apparatus. In terms of biological role, tegument protein that plays different roles during the time course of infection. Participates in both the accumulation of viral mRNAs and viral protein translation at late time of infection. Modulates the RNase activity of the virion host shutoff protein UL41 probably to ensure necessary levels of key cellular mRNAs and proteins. Plays a role in microtubule reorganization that occurs after viral infection by stabilizing microtubule network. Plays a role in the inhibition of host innate immune system by targeting the CGAS enzymatic activity which is the principal cytosolic DNA sensor that detects invading viral DNA. Acts by mediating disruption of liquid-like droplets in which CGAS is activated, thereby preventing CGAS activity. This chain is Tegument protein VP22, found in Bovine herpesvirus 1.1 (strain Cooper) (BoHV-1).